The chain runs to 207 residues: MARCKS-related protein 1-B (207 aa).

Composition is skewed to low complexity over residues 1–25 (MGSQ…AAVK) and 63–77 (AGAG…AAEG). Residues 1–207 (MGSQASKGGV…STPAPSEQKE (207 aa)) form a disordered region. Residue Gly-2 is the site of N-myristoyl glycine attachment. Residues 78-90 (EAAKPEGEATKET) show a composition bias toward basic and acidic residues. Positions 93 to 116 (KKKKKFSLKNSFKFKGISLKKSKK) are effector domain involved in lipid-binding. A compositionally biased stretch (low complexity) spans 100–109 (LKNSFKFKGI). Basic and acidic residues-rich tracts occupy residues 131–154 (TEEK…KAEE) and 163–182 (PKAE…KEEA). The span at 195 to 207 (ETNSTPAPSEQKE) shows a compositional bias: polar residues.

This sequence belongs to the MARCKS family. As to expression, strongly expressed in brain and eye. Also detected at lower levels in muscle.

The protein resides in the cytoplasm. Its subcellular location is the cytoskeleton. It localises to the cell membrane. In terms of biological role, involved in the control of cell movement by regulating actin cytoskeleton homeostasis and filopodium and lamellipodium formation. The protein is MARCKS-related protein 1-B of Danio rerio (Zebrafish).